The primary structure comprises 232 residues: Protein FAM246A (232 aa).

3 disordered regions span residues 1–47 (MATP…RAPG), 153–178 (LPPPPPSPPARREPRAVPRATPRGPT), and 191–232 (AASR…GGGD). Residues 19–31 (EVLRRVTGRRRDP) show a composition bias toward basic and acidic residues. Residues 211-220 (APVRKNHKKM) show a composition bias toward basic residues.

Belongs to the FAM246 family.

In Homo sapiens (Human), this protein is Protein FAM246A.